The chain runs to 486 residues: Kynureninase 1 (486 aa).

The interval 53–72 is disordered; the sequence is DLKRTTLDPNQEPEHSPTPS. Pyridoxal 5'-phosphate is bound by residues leucine 146, threonine 147, 174 to 177, serine 231, aspartate 260, histidine 263, and tyrosine 285; that span reads FPSD. Lysine 286 is modified (N6-(pyridoxal phosphate)lysine). Pyridoxal 5'-phosphate contacts are provided by tryptophan 326 and asparagine 354.

This sequence belongs to the kynureninase family. In terms of assembly, homodimer. Pyridoxal 5'-phosphate serves as cofactor.

It localises to the cytoplasm. The enzyme catalyses L-kynurenine + H2O = anthranilate + L-alanine + H(+). The catalysed reaction is 3-hydroxy-L-kynurenine + H2O = 3-hydroxyanthranilate + L-alanine + H(+). It functions in the pathway amino-acid degradation; L-kynurenine degradation; L-alanine and anthranilate from L-kynurenine: step 1/1. Its pathway is cofactor biosynthesis; NAD(+) biosynthesis; quinolinate from L-kynurenine: step 2/3. Functionally, catalyzes the cleavage of L-kynurenine (L-Kyn) and L-3-hydroxykynurenine (L-3OHKyn) into anthranilic acid (AA) and 3-hydroxyanthranilic acid (3-OHAA), respectively. This is Kynureninase 1 (bna5-1) from Aspergillus clavatus (strain ATCC 1007 / CBS 513.65 / DSM 816 / NCTC 3887 / NRRL 1 / QM 1276 / 107).